The following is a 500-amino-acid chain: Beta-glucosidase 28 (500 aa).

A signal peptide spans 1–24 (MDRRLLLSALLFIALACSSNRVHG). A beta-D-glucoside is bound at residue Gln45. Asn111 carries an N-linked (GlcNAc...) asparagine glycan. A beta-D-glucoside-binding positions include His146 and 191 to 192 (NE). The active-site Proton donor is the Glu192. Cys211 and Cys219 are oxidised to a cystine. An a beta-D-glucoside-binding site is contributed by Tyr337. N-linked (GlcNAc...) asparagine glycosylation is present at Asn362. Glu408 contacts a beta-D-glucoside. Glu408 functions as the Nucleophile in the catalytic mechanism. 3 N-linked (GlcNAc...) asparagine glycosylation sites follow: Asn409, Asn415, and Asn416. A beta-D-glucoside contacts are provided by residues Trp457, 464–465 (EF), and Phe473.

Belongs to the glycosyl hydrolase 1 family.

The catalysed reaction is Hydrolysis of terminal, non-reducing beta-D-glucosyl residues with release of beta-D-glucose.. The chain is Beta-glucosidase 28 (BGLU28) from Oryza sativa subsp. japonica (Rice).